An 856-amino-acid chain; its full sequence is Alanine/arginine aminopeptidase (856 aa).

Substrate is bound by residues Glu-132 and 264–268 (GAMEN). His-300 provides a ligand contact to Zn(2+). Catalysis depends on Glu-301, which acts as the Proton acceptor. Zn(2+)-binding residues include His-304 and Glu-323.

This sequence belongs to the peptidase M1 family. It depends on Zn(2+) as a cofactor.

Its function is as follows. Positive effector of glycogen accumulation. May be involved in nutrient-sensing. The sequence is that of Alanine/arginine aminopeptidase (AAP1) from Saccharomyces cerevisiae (strain ATCC 204508 / S288c) (Baker's yeast).